A 426-amino-acid chain; its full sequence is Synaptotagmin-13 (426 aa).

Over 1–6 (MVLSVP) the chain is Vesicular. The helical transmembrane segment at 7 to 29 (VIALGATLGTATSILALCGVTCL) threads the bilayer. Topologically, residues 30 to 426 (CRHMHPKKGL…QIAMWHQLHL (397 aa)) are cytoplasmic. C2 domains follow at residues 158-275 (QAPK…AQWG) and 287-422 (GTGE…AMWH).

Belongs to the synaptotagmin family. In terms of assembly, interacts with NRXN1. Expressed in brain, spleen, kidney and testis.

It localises to the membrane. May be involved in transport vesicle docking to the plasma membrane. The sequence is that of Synaptotagmin-13 (Syt13) from Rattus norvegicus (Rat).